The primary structure comprises 194 residues: Molybdenum cofactor guanylyltransferase (194 aa).

GTP is bound by residues 12–14 (LAG), K25, N53, D70, and D100. D100 is a binding site for Mg(2+).

The protein belongs to the MobA family. Monomer. It depends on Mg(2+) as a cofactor.

It is found in the cytoplasm. It carries out the reaction Mo-molybdopterin + GTP + H(+) = Mo-molybdopterin guanine dinucleotide + diphosphate. Transfers a GMP moiety from GTP to Mo-molybdopterin (Mo-MPT) cofactor (Moco or molybdenum cofactor) to form Mo-molybdopterin guanine dinucleotide (Mo-MGD) cofactor. This chain is Molybdenum cofactor guanylyltransferase, found in Photobacterium profundum (strain SS9).